The chain runs to 732 residues: Subtilisin-like protease SBT4.13 (732 aa).

A signal peptide spans 1–24 (MATLAASSSLLSCLLVLFLSSVSA). The propeptide at 25 to 109 (VTDDKQVYIV…VFPNKKLQLQ (85 aa)) is activation peptide. An Inhibitor I9 domain is found at 31–108 (VYIVYMGSLS…SVFPNKKLQL (78 aa)). One can recognise a Peptidase S8 domain in the interval 113–579 (SWDFMGLKEG…SGHVDPIAAS (467 aa)). The active-site Charge relay system is D141. N172 carries an N-linked (GlcNAc...) asparagine glycan. The active-site Charge relay system is the H196. The N-linked (GlcNAc...) asparagine glycan is linked to N219. Residues 352–436 (DYPLVYGKSA…GLLTEDFESL (85 aa)) enclose the PA domain. N-linked (GlcNAc...) asparagine glycosylation occurs at N458. Residue S518 is the Charge relay system of the active site. Residues N555, N600, N648, and N658 are each glycosylated (N-linked (GlcNAc...) asparagine).

This sequence belongs to the peptidase S8 family. The C-terminal propeptide is autocleaved.

It localises to the secreted. In Arabidopsis thaliana (Mouse-ear cress), this protein is Subtilisin-like protease SBT4.13.